A 418-amino-acid polypeptide reads, in one-letter code: Phospho-N-acetylmuramoyl-pentapeptide-transferase (418 aa).

The next 10 helical transmembrane spans lie at 22 to 42, 72 to 92, 95 to 115, 135 to 155, 208 to 228, 244 to 264, 277 to 297, 302 to 322, 326 to 346, and 395 to 415; these read YISF…VLIG, TPTM…LLLA, SNIY…LGLI, IIAQ…SPNI, AATW…VSNG, AIIG…GFAA, LTVF…HNAF, FMGD…AIII, LLLP…MIQV, and KIVV…VVTL.

The protein belongs to the glycosyltransferase 4 family. MraY subfamily. It depends on Mg(2+) as a cofactor.

The protein localises to the cell inner membrane. It carries out the reaction UDP-N-acetyl-alpha-D-muramoyl-L-alanyl-gamma-D-glutamyl-meso-2,6-diaminopimeloyl-D-alanyl-D-alanine + di-trans,octa-cis-undecaprenyl phosphate = di-trans,octa-cis-undecaprenyl diphospho-N-acetyl-alpha-D-muramoyl-L-alanyl-D-glutamyl-meso-2,6-diaminopimeloyl-D-alanyl-D-alanine + UMP. It participates in cell wall biogenesis; peptidoglycan biosynthesis. In terms of biological role, catalyzes the initial step of the lipid cycle reactions in the biosynthesis of the cell wall peptidoglycan: transfers peptidoglycan precursor phospho-MurNAc-pentapeptide from UDP-MurNAc-pentapeptide onto the lipid carrier undecaprenyl phosphate, yielding undecaprenyl-pyrophosphoryl-MurNAc-pentapeptide, known as lipid I. This is Phospho-N-acetylmuramoyl-pentapeptide-transferase from Azobacteroides pseudotrichonymphae genomovar. CFP2.